The chain runs to 298 residues: Protoheme IX farnesyltransferase (298 aa).

The next 9 membrane-spanning stretches (helical) occupy residues 29–49 (LIVF…PPLL), 51–71 (FGVA…LNCL), 97–117 (ETVT…HGFI), 120–140 (LTMW…TLIL), 148–168 (IVIG…AMTG), 175–195 (LVLF…LACY), 221–241 (ILWY…LGMS), 243–263 (GFYL…AIAL), and 278–298 (YSIL…LIVL).

The protein belongs to the UbiA prenyltransferase family. Protoheme IX farnesyltransferase subfamily.

It is found in the cell inner membrane. The catalysed reaction is heme b + (2E,6E)-farnesyl diphosphate + H2O = Fe(II)-heme o + diphosphate. It participates in porphyrin-containing compound metabolism; heme O biosynthesis; heme O from protoheme: step 1/1. Functionally, converts heme B (protoheme IX) to heme O by substitution of the vinyl group on carbon 2 of heme B porphyrin ring with a hydroxyethyl farnesyl side group. The chain is Protoheme IX farnesyltransferase from Dechloromonas aromatica (strain RCB).